Reading from the N-terminus, the 482-residue chain is Alpha-ketoglutarate semialdehyde dehydrogenase (482 aa).

The interval 1 to 28 (MTDPSKNYVNGEWVTSETGETTEVTNPA) is disordered. The span at 11–25 (GEWVTSETGETTEVT) shows a compositional bias: low complexity. The active site involves cysteine 284.

Belongs to the aldehyde dehydrogenase family. As to quaternary structure, homotetramer.

The catalysed reaction is 2,5-dioxopentanoate + NADP(+) + H2O = 2-oxoglutarate + NADPH + 2 H(+). Its pathway is carbohydrate metabolism; D-xylose degradation. Alpha-ketoglutarate semialdehyde dehydrogenase involved in the degradation of D-xylose, a major component of hemicelluloses such as xylan. Catalyzes the fifth reaction in the xylose utilization pathway through dehydratation of alpha-ketoglutarate semialdehyde (2,5-dioxopentanoate) into alpha-ketoglutarate. In Haloferax volcanii (strain ATCC 29605 / DSM 3757 / JCM 8879 / NBRC 14742 / NCIMB 2012 / VKM B-1768 / DS2) (Halobacterium volcanii), this protein is Alpha-ketoglutarate semialdehyde dehydrogenase.